The primary structure comprises 116 residues: Large ribosomal subunit protein uL24c (116 aa).

The protein belongs to the universal ribosomal protein uL24 family. In terms of assembly, part of the 50S ribosomal subunit.

The protein localises to the plastid. The protein resides in the chloroplast. Its function is as follows. One of two assembly initiator proteins, it binds directly to the 5'-end of the 23S rRNA, where it nucleates assembly of the 50S subunit. In Pyropia yezoensis (Susabi-nori), this protein is Large ribosomal subunit protein uL24c (rpl24).